A 249-amino-acid polypeptide reads, in one-letter code: MKLLLLDLDDTLLQDLPVSRAVLEDLGRKAGVEGFFARVKARAEALFREAPFYPWAEAIGHSALEALWARYSTPGLEALAAWAGPFRERVFREALEEAGGAPERARELAEAFFRERRRYPLYPEAEAFLAEARRRGLALALLTNGVPDLQREKLVGAGLAHHFSLVLISGEVGIGKPDPRLFRMALCAFGVAPEEAAMVGDNPQKDVRGARLAGVRAVWVDRGLRPEDPEASPDLRVGDLREVFLAEAL.

It belongs to the HAD-like hydrolase superfamily. In terms of assembly, homodimer. It depends on Mg(2+) as a cofactor. Requires Co(2+) as cofactor.

It catalyses the reaction O-phospho-L-serine + H2O = L-serine + phosphate. It carries out the reaction O-phospho-D-serine + H2O = D-serine + phosphate. Its pathway is amino-acid biosynthesis; L-serine biosynthesis; L-serine from 3-phospho-D-glycerate: step 3/3. Catalyzes the last step of the phosphorylated serine biosynthetic pathway, i.e. dephosphorylation of O-phospho-L-serine to form L-serine. Is also able to dephosphorylate O-phospho-D-serine with similar efficiency. Displays a poor activity on L-phosphothreonine, and cannot use L-phosphotyrosine, pyridoxal phosphate, glucose 6-phosphate, or fructose 6-phosphate as substrates. This chain is Phosphoserine phosphatase, found in Thermus thermophilus (strain ATCC BAA-163 / DSM 7039 / HB27).